A 73-amino-acid polypeptide reads, in one-letter code: Small, acid-soluble spore protein C5 (73 aa).

Belongs to the alpha/beta-type SASP family.

In terms of biological role, SASP are bound to spore DNA. They are double-stranded DNA-binding proteins that cause DNA to change to an a-like conformation. They protect the DNA backbone from chemical and enzymatic cleavage and are thus involved in dormant spore's high resistance to UV light. This chain is Small, acid-soluble spore protein C5 (SASP-C5), found in Priestia megaterium (Bacillus megaterium).